The following is a 352-amino-acid chain: RNA 3'-terminal phosphate cyclase (352 aa).

Residues glutamine 102 and 292–296 contribute to the ATP site; that span reads HMGDQ. Histidine 318 functions as the Tele-AMP-histidine intermediate in the catalytic mechanism.

The protein belongs to the RNA 3'-terminal cyclase family. Type 1 subfamily.

Its subcellular location is the cytoplasm. It carries out the reaction a 3'-end 3'-phospho-ribonucleotide-RNA + ATP = a 3'-end 2',3'-cyclophospho-ribonucleotide-RNA + AMP + diphosphate. Catalyzes the conversion of 3'-phosphate to a 2',3'-cyclic phosphodiester at the end of RNA. The mechanism of action of the enzyme occurs in 3 steps: (A) adenylation of the enzyme by ATP; (B) transfer of adenylate to an RNA-N3'P to produce RNA-N3'PP5'A; (C) and attack of the adjacent 2'-hydroxyl on the 3'-phosphorus in the diester linkage to produce the cyclic end product. The biological role of this enzyme is unknown but it is likely to function in some aspects of cellular RNA processing. The protein is RNA 3'-terminal phosphate cyclase of Methanopyrus kandleri (strain AV19 / DSM 6324 / JCM 9639 / NBRC 100938).